The chain runs to 399 residues: Cell division protein FtsZ (399 aa).

Residues 30–34 (GGGSN), 117–119 (GTG), E148, K152, and D196 contribute to the GTP site. The disordered stretch occupies residues 349–368 (TLMSGNQNAPSGSYEQQDSS). Residues 351 to 368 (MSGNQNAPSGSYEQQDSS) show a composition bias toward polar residues.

This sequence belongs to the FtsZ family. As to quaternary structure, homodimer. Polymerizes to form a dynamic ring structure in a strictly GTP-dependent manner. Interacts directly with several other division proteins.

Its subcellular location is the cytoplasm. In terms of biological role, essential cell division protein that forms a contractile ring structure (Z ring) at the future cell division site. The regulation of the ring assembly controls the timing and the location of cell division. One of the functions of the FtsZ ring is to recruit other cell division proteins to the septum to produce a new cell wall between the dividing cells. Binds GTP and shows GTPase activity. The polypeptide is Cell division protein FtsZ (Borreliella burgdorferi (strain ATCC 35210 / DSM 4680 / CIP 102532 / B31) (Borrelia burgdorferi)).